We begin with the raw amino-acid sequence, 199 residues long: ATP-dependent Clp protease proteolytic subunit 3 (199 aa).

Residue Ser101 is the Nucleophile of the active site. His126 is a catalytic residue.

This sequence belongs to the peptidase S14 family. Fourteen ClpP subunits assemble into 2 heptameric rings which stack back to back to give a disk-like structure with a central cavity, resembling the structure of eukaryotic proteasomes.

Its subcellular location is the cytoplasm. It carries out the reaction Hydrolysis of proteins to small peptides in the presence of ATP and magnesium. alpha-casein is the usual test substrate. In the absence of ATP, only oligopeptides shorter than five residues are hydrolyzed (such as succinyl-Leu-Tyr-|-NHMec, and Leu-Tyr-Leu-|-Tyr-Trp, in which cleavage of the -Tyr-|-Leu- and -Tyr-|-Trp bonds also occurs).. In terms of biological role, cleaves peptides in various proteins in a process that requires ATP hydrolysis. Has a chymotrypsin-like activity. Plays a major role in the degradation of misfolded proteins. This chain is ATP-dependent Clp protease proteolytic subunit 3, found in Synechococcus elongatus (strain ATCC 33912 / PCC 7942 / FACHB-805) (Anacystis nidulans R2).